The primary structure comprises 323 residues: Acetyl-coenzyme A carboxylase carboxyl transferase subunit alpha (323 aa).

A CoA carboxyltransferase C-terminal domain is found at 39-293 (RLSKKSQQLT…RRALADSLRQ (255 aa)).

It belongs to the AccA family. In terms of assembly, acetyl-CoA carboxylase is a heterohexamer composed of biotin carboxyl carrier protein (AccB), biotin carboxylase (AccC) and two subunits each of ACCase subunit alpha (AccA) and ACCase subunit beta (AccD).

The protein localises to the cytoplasm. The catalysed reaction is N(6)-carboxybiotinyl-L-lysyl-[protein] + acetyl-CoA = N(6)-biotinyl-L-lysyl-[protein] + malonyl-CoA. It participates in lipid metabolism; malonyl-CoA biosynthesis; malonyl-CoA from acetyl-CoA: step 1/1. Component of the acetyl coenzyme A carboxylase (ACC) complex. First, biotin carboxylase catalyzes the carboxylation of biotin on its carrier protein (BCCP) and then the CO(2) group is transferred by the carboxyltransferase to acetyl-CoA to form malonyl-CoA. The polypeptide is Acetyl-coenzyme A carboxylase carboxyl transferase subunit alpha (Burkholderia vietnamiensis (strain G4 / LMG 22486) (Burkholderia cepacia (strain R1808))).